The sequence spans 106 residues: Large ribosomal subunit protein uL23 (106 aa).

This sequence belongs to the universal ribosomal protein uL23 family. Part of the 50S ribosomal subunit. Contacts protein L29, and trigger factor when it is bound to the ribosome.

Its function is as follows. One of the early assembly proteins it binds 23S rRNA. One of the proteins that surrounds the polypeptide exit tunnel on the outside of the ribosome. Forms the main docking site for trigger factor binding to the ribosome. This chain is Large ribosomal subunit protein uL23, found in Acinetobacter baumannii (strain AB307-0294).